Here is a 260-residue protein sequence, read N- to C-terminus: Snake venom serine protease 2 (260 aa).

The signal sequence occupies residues 1–18 (MVLIRVLANLLILQLFYA). Positions 19 to 24 (QKSSEL) are excised as a propeptide. The 227-residue stretch at 25-251 (IIGGDECNIN…HLDWIKSIIA (227 aa)) folds into the Peptidase S1 domain. Disulfide bonds link cysteine 31–cysteine 165, cysteine 52–cysteine 68, cysteine 100–cysteine 258, cysteine 144–cysteine 212, cysteine 176–cysteine 191, and cysteine 202–cysteine 227. N-linked (GlcNAc...) asparagine glycans are attached at residues asparagine 123 and asparagine 124.

Belongs to the peptidase S1 family. Snake venom subfamily. As to quaternary structure, monomer. As to expression, expressed by the venom gland.

The protein localises to the secreted. Snake venom serine protease that may act in the hemostasis system of the prey. This chain is Snake venom serine protease 2 (TLF2), found in Protobothrops flavoviridis (Habu).